A 440-amino-acid chain; its full sequence is Thymidine phosphorylase (440 aa).

This sequence belongs to the thymidine/pyrimidine-nucleoside phosphorylase family. As to quaternary structure, homodimer.

It carries out the reaction thymidine + phosphate = 2-deoxy-alpha-D-ribose 1-phosphate + thymine. The protein operates within pyrimidine metabolism; dTMP biosynthesis via salvage pathway; dTMP from thymine: step 1/2. Its function is as follows. The enzymes which catalyze the reversible phosphorolysis of pyrimidine nucleosides are involved in the degradation of these compounds and in their utilization as carbon and energy sources, or in the rescue of pyrimidine bases for nucleotide synthesis. This Escherichia coli O127:H6 (strain E2348/69 / EPEC) protein is Thymidine phosphorylase.